The following is a 415-amino-acid chain: uncharacterized protein (415 aa).

The next 10 helical transmembrane spans lie at 20–40 (MAYL…FGIL), 43–63 (LMPI…PAIA), 78–98 (IPIL…TPYI), 109–129 (LPNI…VIAF), 155–175 (VILV…LSIS), 243–263 (IVIM…SSLI), 300–320 (IFSS…LIAF), 328–348 (GILC…YTLI), 360–380 (ISFY…LILV), and 388–408 (GSLA…FAIL).

It belongs to the polysaccharide synthase family.

It localises to the cell membrane. This is an uncharacterized protein from Methanocaldococcus jannaschii (strain ATCC 43067 / DSM 2661 / JAL-1 / JCM 10045 / NBRC 100440) (Methanococcus jannaschii).